Reading from the N-terminus, the 298-residue chain is Glycine--tRNA ligase alpha subunit (298 aa).

Belongs to the class-II aminoacyl-tRNA synthetase family. Tetramer of two alpha and two beta subunits.

It localises to the cytoplasm. The enzyme catalyses tRNA(Gly) + glycine + ATP = glycyl-tRNA(Gly) + AMP + diphosphate. In Lacticaseibacillus paracasei (strain ATCC 334 / BCRC 17002 / CCUG 31169 / CIP 107868 / KCTC 3260 / NRRL B-441) (Lactobacillus paracasei), this protein is Glycine--tRNA ligase alpha subunit.